The sequence spans 606 residues: UPF0329 protein ECU06_0090 (606 aa).

A disordered region spans residues Lys-317–Asn-401. A compositionally biased stretch (basic and acidic residues) spans Glu-328 to Gly-353. Residues Ala-354 to Ser-367 show a composition bias toward basic residues. Residues Ser-381–Asn-401 show a composition bias toward basic and acidic residues.

The protein belongs to the UPF0329 family.

In Encephalitozoon cuniculi (strain GB-M1) (Microsporidian parasite), this protein is UPF0329 protein ECU06_0090.